Consider the following 76-residue polypeptide: MSYQQQQCKQPCQPPPVCPPKKCPEPCPHPQCPEPCPPPKCPEPCPEPCPPPSYQQKCPPVQPPPPCQQKCPPKSK.

3 consecutive repeat copies span residues Lys-21–His-29, Pro-30–Pro-38, and Pro-39–Glu-47. Residues Lys-21–Glu-47 form a 3 X 9 AA approximate tandem repeats region. The disordered stretch occupies residues Pro-52–Lys-76.

It belongs to the cornifin (SPRR) family. Expressed in uterus.

Its subcellular location is the cytoplasm. Functionally, cross-linked envelope protein of keratinocytes. It is a keratinocyte protein that first appears in the cell cytosol, but ultimately becomes cross-linked to membrane proteins by transglutaminase. All that results in the formation of an insoluble envelope beneath the plasma membrane. The chain is Small proline-rich protein 2E (Sprr2e) from Mus musculus (Mouse).